The sequence spans 29 residues: Trypsin inhibitor 3 (29 aa).

Intrachain disulfides connect Cys-3/Cys-20, Cys-10/Cys-22, and Cys-16/Cys-28.

It belongs to the protease inhibitor I7 (squash-type serine protease inhibitor) family.

It localises to the secreted. Functionally, inhibits trypsin. The protein is Trypsin inhibitor 3 of Luffa aegyptiaca (Sponge gourd).